The primary structure comprises 357 residues: COP9 signalosome complex subunit 5a (357 aa).

N-acetylmethionine is present on methionine 1. The 138-residue stretch at 59–196 folds into the MPN domain; it reads VHISALALLK…IGAFRTYPEG (138 aa). Histidine 142, histidine 144, and aspartate 155 together coordinate Zn(2+). Residues 142-155 carry the JAMM motif motif; that stretch reads HSHPGYGCWLSGID. The disordered stretch occupies residues 338-357; that stretch reads ARQSKKSADDSSDPEPMITS.

It belongs to the peptidase M67A family. CSN5 subfamily. As to quaternary structure, component of the CSN complex, probably composed of CSN1, CSN2, CSN3, CSN4, CSN5 (CSN5A or CSN5B), CSN6 (CSN6A or CSN6B), CSN7 and CSN8. CSN5A or CSN5B are present within distinct CSN complexes each containing only one copy of CSN5. Interacts with itself. In the complex, it is located in the center and probably interacts directly with CSN4 and CSN6A or CSN6B. Present also in subcomplex forms which inculdes CSN3. Also exists as monomeric form. Interacts with CYT1 in vitro, but not in planta. It depends on a divalent metal cation as a cofactor. As to expression, ubiquitously expressed. Highly expressed in flowers and roots. Expressed at lower level in seedlings and siliques.

It localises to the cytoplasm. The protein localises to the nucleus. Probable protease subunit of the COP9 signalosome complex (CSN), a complex involved in various cellular and developmental processes such as photomorphogenesis and auxin and jasmonate responses. The CSN complex is an essential regulator of the ubiquitin (Ubl) conjugation pathway by mediating the deneddylation of the cullin subunits of the SCF-type E3 ligase complexes, leading to decrease the Ubl ligase activity of SCF. In the complex, it probably acts as the catalytic center that mediates the cleavage of Nedd8 from cullins. It however has no metalloprotease activity by itself and requires the other subunits of the CSN complex. The CSN complex is involved in repression of photomorphogenesis in darkness by regulating the activity of COP1-containing Ubl ligase complexes. The complex is also required for degradation of PSIAA6 by regulating the activity of the Ubl ligase SCF-TIR complex. Involved in CSN's deneddylation/derubylation activity. Required for the deneddylation of all cullins. Essential for the structural integrity of the CSN holocomplex. The protein is COP9 signalosome complex subunit 5a of Arabidopsis thaliana (Mouse-ear cress).